The primary structure comprises 366 residues: Ribosomal RNA large subunit methyltransferase M (366 aa).

Residues Ser-188, 221 to 224 (CPGG), Asp-240, Asp-260, and Asp-277 each bind S-adenosyl-L-methionine. Lys-306 serves as the catalytic Proton acceptor.

It belongs to the class I-like SAM-binding methyltransferase superfamily. RNA methyltransferase RlmE family. RlmM subfamily. Monomer.

The protein resides in the cytoplasm. The catalysed reaction is cytidine(2498) in 23S rRNA + S-adenosyl-L-methionine = 2'-O-methylcytidine(2498) in 23S rRNA + S-adenosyl-L-homocysteine + H(+). Functionally, catalyzes the 2'-O-methylation at nucleotide C2498 in 23S rRNA. In Salmonella heidelberg (strain SL476), this protein is Ribosomal RNA large subunit methyltransferase M.